Consider the following 201-residue polypeptide: Small ribosomal subunit protein uS4 (201 aa).

Residues 91–157 enclose the S4 RNA-binding domain; sequence SRLDNVVYRA…LPFQVARETV (67 aa).

The protein belongs to the universal ribosomal protein uS4 family. As to quaternary structure, part of the 30S ribosomal subunit. Contacts protein S5. The interaction surface between S4 and S5 is involved in control of translational fidelity.

In terms of biological role, one of the primary rRNA binding proteins, it binds directly to 16S rRNA where it nucleates assembly of the body of the 30S subunit. With S5 and S12 plays an important role in translational accuracy. The polypeptide is Small ribosomal subunit protein uS4 (Rhodococcus erythropolis (strain PR4 / NBRC 100887)).